We begin with the raw amino-acid sequence, 43 residues long: Snake venom metalloproteinase crotalin (43 aa).

Positions 1–43 (LLRRKSHDHAQNHDGDKCLRGASLGYYQSFLNQYKPQCILNKP) constitute a Peptidase M12B domain. Residue H13 participates in Zn(2+) binding.

It belongs to the venom metalloproteinase (M12B) family. P-I subfamily. In terms of assembly, monomer. Requires Zn(2+) as cofactor. This protein autoproteolytically degrades to 10 kDa and 14 kDa fragments in the presence of SDS. Interestingly, the two fragments, as well as reduced crotalin are able to bind vWF, indicating that the binding activity does not require a specific protein conformation. Expressed by the venom gland.

The protein resides in the secreted. In terms of biological role, snake venom zinc metalloproteinase that inhibits ristocin-induced platelet aggregation by abolishing the binding of von Willebrand factor (vWF) to platelet glycoprotein Ib alpha (GPIBA) through the cleavage of both GP1BA and vWF. Also has fibrinogenolytic activities by degrading the alpha- (FGA) and beta-chain (FGB) of fibrinogen. In vivo, induces a slight hemorrhage when applied to chick chorioallantoic membrane and has potent antithrombic effect. The protein is Snake venom metalloproteinase crotalin of Crotalus atrox (Western diamondback rattlesnake).